Here is a 144-residue protein sequence, read N- to C-terminus: Eukaryotic translation initiation factor 1A, Y-chromosomal (144 aa).

Positions 1–15 (MPKNKGKGGKNRRRG) are enriched in basic residues. A disordered region spans residues 1 to 26 (MPKNKGKGGKNRRRGKNENESEKREL). The segment covering 16-26 (KNENESEKREL) has biased composition (basic and acidic residues). The S1-like domain maps to 22-96 (EKRELVFKED…NKADVILKYN (75 aa)). Lys-88 is covalently cross-linked (Glycyl lysine isopeptide (Lys-Gly) (interchain with G-Cter in ubiquitin)). Positions 114-144 (KINETDTFGPGDDDEIQFDDIGDDDEDIDDI) are disordered. Residues 124-144 (GDDDEIQFDDIGDDDEDIDDI) are compositionally biased toward acidic residues.

This sequence belongs to the eIF-1A family. As to quaternary structure, component of the 43S pre-initiation complex (43S PIC), which is composed of the 40S ribosomal subunit, EIF1, eIF1A (EIF1AX), eIF3 complex, EIF5 and eIF2-GTP-initiator tRNA complex (eIF2 ternary complex). Interacts with EIF5; this interaction contributes to the maintenance of EIF1 within the open 43S PIC. Interacts through its C-terminal domain (CTD) with the CTD of EIF5B; from the location of the start codon by the 43S complex until the formation of the 80S complex. As to expression, ubiquitous.

Its subcellular location is the cytoplasm. Functionally, component of the 43S pre-initiation complex (43S PIC), which binds to the mRNA cap-proximal region, scans mRNA 5'-untranslated region, and locates the initiation codon. This protein enhances formation of the cap-proximal complex. Together with EIF1, facilitates scanning, start codon recognition, promotion of the assembly of 48S complex at the initiation codon (43S PIC becomes 48S PIC after the start codon is reached), and dissociation of aberrant complexes. After start codon location, together with EIF5B orients the initiator methionine-tRNA in a conformation that allows 60S ribosomal subunit joining to form the 80S initiation complex. Is released after 80S initiation complex formation, just after GTP hydrolysis by EIF5B, and before release of EIF5B. Its globular part is located in the A site of the 40S ribosomal subunit. Its interaction with EIF5 during scanning contribute to the maintenance of EIF1 within the open 43S PIC. In contrast to yeast orthologs, does not bind EIF1. This is Eukaryotic translation initiation factor 1A, Y-chromosomal (EIF1AY) from Homo sapiens (Human).